A 313-amino-acid polypeptide reads, in one-letter code: Intelectin-1b (313 aa).

Positions 1–19 (MTQLGFLLFIMIATRVCSA) are cleaved as a signal peptide. Residues 32–251 (SFFSSLPRSC…NNERAASALC (220 aa)) enclose the Fibrinogen C-terminal domain. An intrachain disulfide couples C41 to C70. Residues H86, E87, N89, G92, G97, D98, and D133 each contribute to the Ca(2+) site. Intrachain disulfides connect C94–C280, C199–C259, and C251–C265. An N-linked (GlcNAc...) asparagine glycan is attached at N163. Ca(2+) is bound by residues N260, E262, E274, and D282. A carbohydrate is bound by residues 262–263 (EH) and E274. The GPI-anchor amidated serine moiety is linked to residue S298. Positions 299–313 (NSREITEAAVLLFYR) are excised as a propeptide.

As to expression, expressed in the globlet and Paneth cells of the small intestine of infected mice. Expressed in the ileum of uninfected mice.

Its subcellular location is the cell membrane. The protein resides in the secreted. Functionally, may play a protective role in the innate immune response to parasite infection. This chain is Intelectin-1b (Itln1b), found in Mus musculus (Mouse).